A 284-amino-acid polypeptide reads, in one-letter code: Glutamate 5-kinase 2 (284 aa).

K26 is a binding site for ATP. S67, D154, and N166 together coordinate substrate. ATP is bound by residues 186 to 187 (SD) and 228 to 234 (SGGMVTK).

This sequence belongs to the glutamate 5-kinase family.

Its subcellular location is the cytoplasm. The enzyme catalyses L-glutamate + ATP = L-glutamyl 5-phosphate + ADP. It participates in amino-acid biosynthesis; L-proline biosynthesis; L-glutamate 5-semialdehyde from L-glutamate: step 1/2. In terms of biological role, catalyzes the transfer of a phosphate group to glutamate to form L-glutamate 5-phosphate. This is Glutamate 5-kinase 2 from Mesorhizobium japonicum (strain LMG 29417 / CECT 9101 / MAFF 303099) (Mesorhizobium loti (strain MAFF 303099)).